Here is a 240-residue protein sequence, read N- to C-terminus: Orotidine 5'-phosphate decarboxylase (240 aa).

Residues aspartate 15, lysine 37, 64–73 (DLKYHDIPNT), threonine 127, arginine 188, glutamine 197, glycine 217, and arginine 218 contribute to the substrate site. The Proton donor role is filled by lysine 66.

This sequence belongs to the OMP decarboxylase family. Type 1 subfamily. As to quaternary structure, homodimer.

It carries out the reaction orotidine 5'-phosphate + H(+) = UMP + CO2. Its pathway is pyrimidine metabolism; UMP biosynthesis via de novo pathway; UMP from orotate: step 2/2. Catalyzes the decarboxylation of orotidine 5'-monophosphate (OMP) to uridine 5'-monophosphate (UMP). The sequence is that of Orotidine 5'-phosphate decarboxylase from Citrifermentans bemidjiense (strain ATCC BAA-1014 / DSM 16622 / JCM 12645 / Bem) (Geobacter bemidjiensis).